The following is a 92-amino-acid chain: C-C motif chemokine 4 (92 aa).

The signal sequence occupies residues 1-23; that stretch reads MKLCVTVLSLLMLVAAFCSPALS. Disulfide bonds link cysteine 34/cysteine 58 and cysteine 35/cysteine 74.

This sequence belongs to the intercrine beta (chemokine CC) family. As to quaternary structure, homodimer and heterodimer of MIP-1-alpha(4-69) and MIP-1-beta(3-69). Post-translationally, N-terminal processed form MIP-1-beta(3-69) is produced by proteolytic cleavage after secretion from peripheral blood lymphocytes.

It localises to the secreted. Its function is as follows. Monokine with inflammatory and chemokinetic properties. Binds to CCR5. One of the major HIV-suppressive factors produced by CD8+ T-cells. Recombinant MIP-1-beta induces a dose-dependent inhibition of different strains of HIV-1, HIV-2, and simian immunodeficiency virus (SIV). The processed form MIP-1-beta(3-69) retains the abilities to induce down-modulation of surface expression of the chemokine receptor CCR5 and to inhibit the CCR5-mediated entry of HIV-1 in T-cells. MIP-1-beta(3-69) is also a ligand for CCR1 and CCR2 isoform B. The protein is C-C motif chemokine 4 (CCL4) of Homo sapiens (Human).